Consider the following 138-residue polypeptide: MSTIRVDVVSTEQSIFSVEAKFVALPGESGELGILRGHTPLITRIRPGSVRIEKADDDEEFVFVAGGYLEIQSDHVTVLADTAIRGHDLDEAKAIEAKKRAEEAMQNRGTDFDLALAQSEFAMAAAQLAAIARFRRKK.

Belongs to the ATPase epsilon chain family. F-type ATPases have 2 components, CF(1) - the catalytic core - and CF(0) - the membrane proton channel. CF(1) has five subunits: alpha(3), beta(3), gamma(1), delta(1), epsilon(1). CF(0) has three main subunits: a, b and c.

It localises to the cell inner membrane. Its function is as follows. Produces ATP from ADP in the presence of a proton gradient across the membrane. The protein is ATP synthase epsilon chain of Polynucleobacter necessarius subsp. necessarius (strain STIR1).